A 180-amino-acid polypeptide reads, in one-letter code: Crossover junction endodeoxyribonuclease RuvC (180 aa).

Catalysis depends on residues Asp7, Glu66, and Asp138. Residues Asp7, Glu66, and Asp138 each coordinate Mg(2+).

It belongs to the RuvC family. In terms of assembly, homodimer which binds Holliday junction (HJ) DNA. The HJ becomes 2-fold symmetrical on binding to RuvC with unstacked arms; it has a different conformation from HJ DNA in complex with RuvA. In the full resolvosome a probable DNA-RuvA(4)-RuvB(12)-RuvC(2) complex forms which resolves the HJ. Mg(2+) serves as cofactor.

The protein resides in the cytoplasm. The catalysed reaction is Endonucleolytic cleavage at a junction such as a reciprocal single-stranded crossover between two homologous DNA duplexes (Holliday junction).. The RuvA-RuvB-RuvC complex processes Holliday junction (HJ) DNA during genetic recombination and DNA repair. Endonuclease that resolves HJ intermediates. Cleaves cruciform DNA by making single-stranded nicks across the HJ at symmetrical positions within the homologous arms, yielding a 5'-phosphate and a 3'-hydroxyl group; requires a central core of homology in the junction. The consensus cleavage sequence is 5'-(A/T)TT(C/G)-3'. Cleavage occurs on the 3'-side of the TT dinucleotide at the point of strand exchange. HJ branch migration catalyzed by RuvA-RuvB allows RuvC to scan DNA until it finds its consensus sequence, where it cleaves and resolves the cruciform DNA. This is Crossover junction endodeoxyribonuclease RuvC from Burkholderia lata (strain ATCC 17760 / DSM 23089 / LMG 22485 / NCIMB 9086 / R18194 / 383).